The sequence spans 398 residues: Chalcone synthase 1 (398 aa).

58 to 65 (KFKRMCDK) contributes to the CoA binding site. Cys167 serves as the catalytic Acyl-thioester intermediate. Residues Thr200 and 219–220 (GD) contribute to the substrate site. Ala311 is a binding site for CoA.

It belongs to the thiolase-like superfamily. Chalcone/stilbene synthases family. As to quaternary structure, homodimer.

It carries out the reaction (E)-4-coumaroyl-CoA + 3 malonyl-CoA + 3 H(+) = 2',4,4',6'-tetrahydroxychalcone + 3 CO2 + 4 CoA. It functions in the pathway secondary metabolite biosynthesis; flavonoid biosynthesis. Functionally, the primary product of this enzyme is 4,2',4',6'-tetrahydroxychalcone (also termed naringenin-chalcone or chalcone) which can under specific conditions spontaneously isomerize into naringenin. The polypeptide is Chalcone synthase 1 (CHS1) (Oryza sativa subsp. japonica (Rice)).